The primary structure comprises 397 residues: Argininosuccinate synthase (397 aa).

8–16 (AYSGGLDTS) contacts ATP. L-citrulline-binding residues include Tyr-86 and Ser-91. Gly-116 contributes to the ATP binding site. L-aspartate-binding residues include Thr-118, Asn-122, and Asp-123. Asn-122 contributes to the L-citrulline binding site. 5 residues coordinate L-citrulline: Arg-126, Ser-175, Ser-184, Glu-260, and Tyr-272.

It belongs to the argininosuccinate synthase family. Type 1 subfamily. As to quaternary structure, homotetramer.

It is found in the cytoplasm. It carries out the reaction L-citrulline + L-aspartate + ATP = 2-(N(omega)-L-arginino)succinate + AMP + diphosphate + H(+). The protein operates within amino-acid biosynthesis; L-arginine biosynthesis; L-arginine from L-ornithine and carbamoyl phosphate: step 2/3. The polypeptide is Argininosuccinate synthase (Clostridium botulinum (strain 657 / Type Ba4)).